Reading from the N-terminus, the 1053-residue chain is MPKRTDIKKVLLIGSGPIQIGQAAEFDFSGSQACRSLKEEGIEVVLVNSNPATIMTDPDMADQIYIEPLRANIIAKIIEKERPDGILSGMGGQTGLNLTAELAEMGALKGVEILGTPLEAIYKGEDREKFRDLMNEIGEPVPKSIVLNTLSQIDDAIAKIGLPAVVRPAYTLGGAGGGIGRTREELTRIVELGLSRSRIHQVLIEESVMGWKELEFEVMRDSTDTCIIVCSMENVDPMGIHTGESVVVAPILTLRDDEFQMMRSAAIHIIRALDVQGGCNIQFAFKDGDYRVIEVNPRVSRSSALASKATGYPIARVAAKIAIGLRLDEIKNSVTGCTAASFEPTIDYIVVKVPRWPFDKFKGADRTLTTSMKSTGEVMAIGRTLEESFMKAKRSIDTDVRTHTSPSEIRMILSRPTDERFHCLFDAFRQGFTLDEIAGLTSIVPFFLEKIKNIVDLEKRLAAGCTDEDIFLAKRYGFANTEIAALTGRGADTIEALVGAPAYKMVDTCAAEFPASTPYFYSTREGTSEIVRDKKQKILILGSGPIRIGQGIEFDYCTVHAVKALREEGVEVHIVNNNPETVSTDFDTSDRLFFEPMLLEDVTNILMTDEYYGVMVQFGGQNAVNLAVPLEKELKRRGMCTRILGTSPDAMDIAEDRDRFSVLLTTLQIPSPANSSAYSEAEAREKAERIGYPVLVRPSYVLGGRAMEIVHNTAELETYMKEAVRVSQHHPVLIDSYLRNAIELDVDAVCDGKEVLIGGIMEHIEQAGIHSGDSACVIPTQSLSPEVIATVREYTKKIALGLGVVGLVNIQMAVKDNVVYILEANPRASRTVPFVSKATGLPIAKIAAKVMIGKKLCDLGFHEAKIRHVAVKEVLLPFNKLAGVDTILGPEMKSTGEVMGIDYDFGLAFYKACISADNELPLKGNVFVSVNIGQKDEVIPIARRLRDLGLTLYGTEGTVDYLHEAGVEAHLVRKVQEGSPNVLDMMHHGEIRLIINTPQDRQSRQDHYQIMRAAVDFQIPYITTLQAARAAALAIDAIKREKITLEPLSHYLR.

The tract at residues 1–397 is carboxyphosphate synthetic domain; it reads MPKRTDIKKV…SFMKAKRSID (397 aa). 12 residues coordinate ATP: R127, R167, G173, G174, E206, V208, E213, G239, I240, H241, Q282, and E294. The region spanning 131 to 323 is the ATP-grasp 1 domain; the sequence is RDLMNEIGEP…IARVAAKIAI (193 aa). Q282, E294, and N296 together coordinate Mg(2+). Residues Q282, E294, and N296 each contribute to the Mn(2+) site. An oligomerization domain region spans residues 398 to 530; the sequence is TDVRTHTSPS…YSTREGTSEI (133 aa). Residues 531–919 form a carbamoyl phosphate synthetic domain region; that stretch reads VRDKKQKILI…YKACISADNE (389 aa). Residues 661–852 form the ATP-grasp 2 domain; the sequence is SVLLTTLQIP…IAKIAAKVMI (192 aa). The ATP site is built by R697, S736, L738, E743, G768, I769, H770, S771, Q811, and E823. Residues Q811, E823, and N825 each coordinate Mg(2+). The Mn(2+) site is built by Q811, E823, and N825. The region spanning 918–1053 is the MGS-like domain; that stretch reads NELPLKGNVF…TLEPLSHYLR (136 aa). Positions 920-1053 are allosteric domain; that stretch reads LPLKGNVFVS…TLEPLSHYLR (134 aa).

Belongs to the CarB family. Composed of two chains; the small (or glutamine) chain promotes the hydrolysis of glutamine to ammonia, which is used by the large (or ammonia) chain to synthesize carbamoyl phosphate. Tetramer of heterodimers (alpha,beta)4. Mg(2+) is required as a cofactor. The cofactor is Mn(2+).

The enzyme catalyses hydrogencarbonate + L-glutamine + 2 ATP + H2O = carbamoyl phosphate + L-glutamate + 2 ADP + phosphate + 2 H(+). The catalysed reaction is hydrogencarbonate + NH4(+) + 2 ATP = carbamoyl phosphate + 2 ADP + phosphate + 2 H(+). The protein operates within amino-acid biosynthesis; L-arginine biosynthesis; carbamoyl phosphate from bicarbonate: step 1/1. Its pathway is pyrimidine metabolism; UMP biosynthesis via de novo pathway; (S)-dihydroorotate from bicarbonate: step 1/3. Large subunit of the glutamine-dependent carbamoyl phosphate synthetase (CPSase). CPSase catalyzes the formation of carbamoyl phosphate from the ammonia moiety of glutamine, carbonate, and phosphate donated by ATP, constituting the first step of 2 biosynthetic pathways, one leading to arginine and/or urea and the other to pyrimidine nucleotides. The large subunit (synthetase) binds the substrates ammonia (free or transferred from glutamine from the small subunit), hydrogencarbonate and ATP and carries out an ATP-coupled ligase reaction, activating hydrogencarbonate by forming carboxy phosphate which reacts with ammonia to form carbamoyl phosphate. This Methanoregula boonei (strain DSM 21154 / JCM 14090 / 6A8) protein is Carbamoyl phosphate synthase large chain.